The sequence spans 457 residues: Siroheme synthase (457 aa).

A precorrin-2 dehydrogenase /sirohydrochlorin ferrochelatase region spans residues 1-204 (MDHLPIFCQL…NDQKAITETT (204 aa)). NAD(+) is bound by residues 22–23 (DV) and 43–44 (LA). Residue Ser128 is modified to Phosphoserine. The tract at residues 216–457 (GEVVLVGAGP…RDKLNWFSNH (242 aa)) is uroporphyrinogen-III C-methyltransferase. S-adenosyl-L-methionine is bound at residue Pro225. Residue Asp248 is the Proton acceptor of the active site. Lys270 functions as the Proton donor in the catalytic mechanism. S-adenosyl-L-methionine is bound by residues 301 to 303 (GGD), Ile306, 331 to 332 (TA), Met382, and Gly411.

In the N-terminal section; belongs to the precorrin-2 dehydrogenase / sirohydrochlorin ferrochelatase family. This sequence in the C-terminal section; belongs to the precorrin methyltransferase family.

The enzyme catalyses uroporphyrinogen III + 2 S-adenosyl-L-methionine = precorrin-2 + 2 S-adenosyl-L-homocysteine + H(+). The catalysed reaction is precorrin-2 + NAD(+) = sirohydrochlorin + NADH + 2 H(+). It carries out the reaction siroheme + 2 H(+) = sirohydrochlorin + Fe(2+). The protein operates within cofactor biosynthesis; adenosylcobalamin biosynthesis; precorrin-2 from uroporphyrinogen III: step 1/1. It participates in cofactor biosynthesis; adenosylcobalamin biosynthesis; sirohydrochlorin from precorrin-2: step 1/1. It functions in the pathway porphyrin-containing compound metabolism; siroheme biosynthesis; precorrin-2 from uroporphyrinogen III: step 1/1. Its pathway is porphyrin-containing compound metabolism; siroheme biosynthesis; siroheme from sirohydrochlorin: step 1/1. The protein operates within porphyrin-containing compound metabolism; siroheme biosynthesis; sirohydrochlorin from precorrin-2: step 1/1. In terms of biological role, multifunctional enzyme that catalyzes the SAM-dependent methylations of uroporphyrinogen III at position C-2 and C-7 to form precorrin-2 via precorrin-1. Then it catalyzes the NAD-dependent ring dehydrogenation of precorrin-2 to yield sirohydrochlorin. Finally, it catalyzes the ferrochelation of sirohydrochlorin to yield siroheme. The chain is Siroheme synthase from Escherichia coli O8 (strain IAI1).